A 53-amino-acid polypeptide reads, in one-letter code: Large ribosomal subunit protein uL30 (53 aa).

It belongs to the universal ribosomal protein uL30 family. In terms of assembly, part of the 50S ribosomal subunit.

This chain is Large ribosomal subunit protein uL30, found in Deinococcus geothermalis (strain DSM 11300 / CIP 105573 / AG-3a).